The sequence spans 430 residues: MPHYQVVKGARDIFPDEILQWKHVEGVIHRLAALYGFNEIRTPVFEYTELFQRSIGSSTDIVGKEMFSFLPDPSGRSITLRPEMTAGVMRAALQKNLLAAAPVQKLYYISELFRKERPQAGRQRQFSQFGAELLGVSSPAAVAEVITFMMHVFEDLGLQGLKLRINTLGNMDDRKRYRDALRNYLAPCYEQLDDASKERFEKNPLRILDSKNPEMQQIVKDAPKLYDYLGREALDDFEKVLFYLSARGIPFQIDHRLVRGLDYYSYTAFEVTSSALGAQDALGGGGRYDSLAVELGSSGEVPASGFAVGMERLLIAMQKQGLFSDLDAAAPSVFVIVQQEELFDQALEIVTTLRRAGISAVIDLAGRSMKAQLREANRMNAANALFVGSDELASGKCTMKDLRSSLQDEYFLEEIIDKFRKPEPLNRLRS.

It belongs to the class-II aminoacyl-tRNA synthetase family. As to quaternary structure, homodimer.

It is found in the cytoplasm. It carries out the reaction tRNA(His) + L-histidine + ATP = L-histidyl-tRNA(His) + AMP + diphosphate + H(+). The chain is Histidine--tRNA ligase from Chlorobium limicola (strain DSM 245 / NBRC 103803 / 6330).